The chain runs to 203 residues: Reticulon-like protein B12 (203 aa).

Residues 24–203 (VADVMLWRKK…WANPENKKLS (180 aa)) enclose the Reticulon domain. Helical transmembrane passes span 34 to 54 (NVSVGIVTVTIASWMVFEAFA), 55 to 75 (YTIFTLISSVLLLLLSILFLW), and 132 to 152 (VAVSLFLLSLIGSLMDFQTLC).

Its subcellular location is the endoplasmic reticulum membrane. This is Reticulon-like protein B12 (RTNLB12) from Arabidopsis thaliana (Mouse-ear cress).